The following is an 83-amino-acid chain: Short neurotoxin OKI-Ed (83 aa).

The N-terminal stretch at 1–21 (MKTLLLTLVVVTIVCLDLGYT) is a signal peptide. Disulfide bonds link Cys-24–Cys-45, Cys-38–Cys-62, Cys-64–Cys-75, and Cys-76–Cys-81.

It belongs to the three-finger toxin family. Short-chain subfamily. Type I alpha-neurotoxin sub-subfamily. In terms of tissue distribution, expressed by the venom gland.

The protein resides in the secreted. Functionally, binds to muscle nicotinic acetylcholine receptor (nAChR) and inhibit acetylcholine from binding to the receptor, thereby impairing neuromuscular transmission. The sequence is that of Short neurotoxin OKI-Ed from Laticauda semifasciata (Black-banded sea krait).